The sequence spans 281 residues: Homoserine kinase (281 aa).

83–93 (PVSSGLGSSAA) is a binding site for ATP.

It belongs to the GHMP kinase family. Homoserine kinase subfamily.

It localises to the cytoplasm. The enzyme catalyses L-homoserine + ATP = O-phospho-L-homoserine + ADP + H(+). The protein operates within amino-acid biosynthesis; L-threonine biosynthesis; L-threonine from L-aspartate: step 4/5. In terms of biological role, catalyzes the ATP-dependent phosphorylation of L-homoserine to L-homoserine phosphate. The protein is Homoserine kinase of Thermotoga petrophila (strain ATCC BAA-488 / DSM 13995 / JCM 10881 / RKU-1).